The primary structure comprises 312 residues: uncharacterized protein (312 aa).

The disordered stretch occupies residues 95 to 119 (EKRRENPPKLTLPPLPPPAEERKKP).

The protein resides in the plastid. The protein localises to the chloroplast. This is an uncharacterized protein from Chlamydomonas moewusii (Chlamydomonas eugametos).